A 321-amino-acid polypeptide reads, in one-letter code: Putative membrane-bound redox modulator Alx (321 aa).

At 1–6 the chain is on the periplasmic side; it reads MNTVGT. A helical membrane pass occupies residues 7–27; that stretch reads PLLWGGFAVVVTIMLAIDLLL. Residues 28–43 lie on the Cytoplasmic side of the membrane; it reads QGRRGAHAMTMKQAAA. Residues 44 to 64 traverse the membrane as a helical segment; the sequence is WSLVWVTLSLLFNAAFWWYLV. Over 65–89 the chain is Periplasmic; sequence QTEGRAVADPQALAFLTGYLIEKSL. The helical transmembrane segment at 90 to 110 threads the bilayer; that stretch reads AVDNVFVWLMLFSYFSVPAAL. Over 111 to 113 the chain is Cytoplasmic; that stretch reads QRR. The chain crosses the membrane as a helical span at residues 114-134; sequence VLVYGVLGAIVLRTIMIFTGS. A topological domain (periplasmic) is located at residue Trp135. A helical transmembrane segment spans residues 136–156; the sequence is LISQFDWILYIFGAFLLFTGV. Residues 157–198 lie on the Cytoplasmic side of the membrane; it reads KMALAHEDESGIGDKPLVRWLRGHLRMTDTIDNEHFFVRKNG. A helical transmembrane segment spans residues 199 to 219; that stretch reads LLYATPLMLVLILVELSDVIF. The Periplasmic segment spans residues 220–225; it reads AVDSIP. The helical transmembrane segment at 226–246 threads the bilayer; the sequence is AIFAVTTDPFIVLTSNLFAIL. At 247–261 the chain is on the cytoplasmic side; sequence GLRAMYFLLAGVAER. Residues 262–282 traverse the membrane as a helical segment; sequence FSMLKYGLAVILVFIGIKMLI. Residues 283–286 are Periplasmic-facing; the sequence is VDFY. A helical transmembrane segment spans residues 287-307; that stretch reads HIPIAVSLGVVFGILVMTFII. Topologically, residues 308–321 are cytoplasmic; that stretch reads NAWVNYRHDKQRVE.

This sequence belongs to the TerC family.

The protein resides in the cell inner membrane. Has been proposed to be a redox modulator. The sequence is that of Putative membrane-bound redox modulator Alx (alx) from Escherichia coli O6:H1 (strain CFT073 / ATCC 700928 / UPEC).